An 84-amino-acid chain; its full sequence is Small ribosomal subunit protein bS18A (84 aa).

The protein belongs to the bacterial ribosomal protein bS18 family. Part of the 30S ribosomal subunit. Forms a tight heterodimer with protein bS6.

In terms of biological role, binds as a heterodimer with protein bS6 to the central domain of the 16S rRNA, where it helps stabilize the platform of the 30S subunit. In Mycobacterium bovis (strain ATCC BAA-935 / AF2122/97), this protein is Small ribosomal subunit protein bS18A (rpsR1).